The sequence spans 518 residues: Protein translocase subunit SecD (518 aa).

Transmembrane regions (helical) follow at residues 9 to 29 (IVLSIICTVFAIICALPNFIQ), 356 to 376 (GKKAGLIGFVAVCIFMILSYG), 377 to 397 (VIGLFANIALILALLYILALL), 406 to 426 (LPGIAGIILTIGMAVDANVLI), 463 to 483 (LIVAFALYIFGVGAIKGFAVA), and 486 to 506 (IGIISSMFSAIIITKLLIDVW).

Belongs to the SecD/SecF family. SecD subfamily. In terms of assembly, forms a complex with SecF. Part of the essential Sec protein translocation apparatus which comprises SecA, SecYEG and auxiliary proteins SecDF-YajC and YidC.

Its subcellular location is the cell inner membrane. In terms of biological role, part of the Sec protein translocase complex. Interacts with the SecYEG preprotein conducting channel. SecDF uses the proton motive force (PMF) to complete protein translocation after the ATP-dependent function of SecA. This Rickettsia prowazekii (strain Madrid E) protein is Protein translocase subunit SecD.